Reading from the N-terminus, the 127-residue chain is Small ribosomal subunit protein eS8 (127 aa).

Belongs to the eukaryotic ribosomal protein eS8 family. In terms of assembly, part of the 30S ribosomal subunit.

The sequence is that of Small ribosomal subunit protein eS8 (rps8e) from Pyrococcus horikoshii (strain ATCC 700860 / DSM 12428 / JCM 9974 / NBRC 100139 / OT-3).